A 122-amino-acid polypeptide reads, in one-letter code: Large ribosomal subunit protein uL14c (122 aa).

Belongs to the universal ribosomal protein uL14 family. As to quaternary structure, part of the 50S ribosomal subunit.

It is found in the plastid. The protein localises to the chloroplast. Its function is as follows. Binds to 23S rRNA. The polypeptide is Large ribosomal subunit protein uL14c (Gracilaria tenuistipitata var. liui (Red alga)).